Consider the following 140-residue polypeptide: Small ribosomal subunit protein uS12 (140 aa).

Residues 1–44 are disordered; sequence MPTFNQLVRKGRKTMEKNSQAPALQKGFNSLRKKTTDASAPQKR. 3-methylthioaspartic acid is present on Asp102. Residues 120-140 form a disordered region; the sequence is VAKRRQARSKYGAKRPKEAKK. The segment covering 121–140 has biased composition (basic residues); it reads AKRRQARSKYGAKRPKEAKK.

This sequence belongs to the universal ribosomal protein uS12 family. Part of the 30S ribosomal subunit. Contacts proteins S8 and S17. May interact with IF1 in the 30S initiation complex.

With S4 and S5 plays an important role in translational accuracy. Functionally, interacts with and stabilizes bases of the 16S rRNA that are involved in tRNA selection in the A site and with the mRNA backbone. Located at the interface of the 30S and 50S subunits, it traverses the body of the 30S subunit contacting proteins on the other side and probably holding the rRNA structure together. The combined cluster of proteins S8, S12 and S17 appears to hold together the shoulder and platform of the 30S subunit. The protein is Small ribosomal subunit protein uS12 of Lachnoclostridium phytofermentans (strain ATCC 700394 / DSM 18823 / ISDg) (Clostridium phytofermentans).